Consider the following 685-residue polypeptide: Sulfite reductase [ferredoxin], chloroplastic (685 aa).

A chloroplast-targeting transit peptide spans 1–51 (MTTSFAAAALRDPKLQIPNYHGLRSSSAASSLSRNALSVPSSTRSSSLIRA). 4 residues coordinate [4Fe-4S] cluster: Cys-495, Cys-501, Cys-541, and Cys-545. A siroheme-binding site is contributed by Cys-545.

Belongs to the nitrite and sulfite reductase 4Fe-4S domain family. Monomer. Interacts with ferredoxin. It depends on siroheme as a cofactor. Requires [4Fe-4S] cluster as cofactor. Post-translationally, phosphorylated; this phosphorylation reduces DNA-binding. As to expression, expressed in leaves, stems, and roots.

The protein resides in the plastid. Its subcellular location is the chloroplast stroma. It localises to the chloroplast nucleoid. It is found in the plastid stroma. It catalyses the reaction hydrogen sulfide + 6 oxidized [2Fe-2S]-[ferredoxin] + 3 H2O = sulfite + 6 reduced [2Fe-2S]-[ferredoxin] + 7 H(+). Its function is as follows. Essential protein with sulfite reductase activity required in assimilatory sulfate reduction pathway during both primary and secondary metabolism and thus involved in development and growth. In terms of biological role, DNA-binding protein that binds to both double-stranded and single-stranded DNA without significant sequence specificity to reversibly repress the transcriptional activity of chloroplast nucleoids by promoting DNA compaction and possibly regulate DNA replication. The polypeptide is Sulfite reductase [ferredoxin], chloroplastic (SIR) (Pisum sativum (Garden pea)).